The chain runs to 196 residues: Adenylate kinase (196 aa).

9–17 serves as a coordination point for ATP; sequence GIPGVGKST.

It belongs to the archaeal adenylate kinase family.

It localises to the cytoplasm. It catalyses the reaction AMP + ATP = 2 ADP. The protein is Adenylate kinase of Pyrococcus furiosus (strain ATCC 43587 / DSM 3638 / JCM 8422 / Vc1).